A 64-amino-acid polypeptide reads, in one-letter code: Protein translocase subunit SecE (64 aa).

The chain crosses the membrane as a helical span at residues 35–55 (LVVLGTVAFITVFFAVVDYGI).

Belongs to the SecE/SEC61-gamma family. In terms of assembly, component of the Sec protein translocase complex. Heterotrimer consisting of SecY, SecE and SecG subunits. The heterotrimers can form oligomers, although 1 heterotrimer is thought to be able to translocate proteins. Interacts with the ribosome. Interacts with SecDF, and other proteins may be involved. Interacts with SecA.

The protein resides in the cell membrane. In terms of biological role, essential subunit of the Sec protein translocation channel SecYEG. Clamps together the 2 halves of SecY. May contact the channel plug during translocation. This chain is Protein translocase subunit SecE, found in Halalkalibacterium halodurans (strain ATCC BAA-125 / DSM 18197 / FERM 7344 / JCM 9153 / C-125) (Bacillus halodurans).